We begin with the raw amino-acid sequence, 980 residues long: Conserved oligomeric Golgi complex subunit 1 (980 aa).

Ala-2 carries the post-translational modification N-acetylalanine. Ser-7 carries the phosphoserine modification.

The protein belongs to the COG1 family. As to quaternary structure, component of the conserved oligomeric Golgi complex which is composed of eight different subunits and is required for normal Golgi morphology and localization.

It is found in the golgi apparatus membrane. Required for normal Golgi function. The polypeptide is Conserved oligomeric Golgi complex subunit 1 (COG1) (Homo sapiens (Human)).